A 199-amino-acid chain; its full sequence is Thymidylate kinase (199 aa).

7-14 is an ATP binding site; the sequence is GIDGSGKT.

The protein belongs to the thymidylate kinase family.

The catalysed reaction is dTMP + ATP = dTDP + ADP. Functionally, phosphorylation of dTMP to form dTDP in both de novo and salvage pathways of dTTP synthesis. The chain is Thymidylate kinase from Tropheryma whipplei (strain Twist) (Whipple's bacillus).